The primary structure comprises 100 residues: Probable DNA-binding protein HU (100 aa).

This sequence belongs to the bacterial histone-like protein family.

Functionally, histone-like DNA-binding protein which is capable of wrapping DNA to stabilize it, and thus to prevent its denaturation under extreme environmental conditions. The sequence is that of Probable DNA-binding protein HU (hup) from Chlamydia muridarum (strain MoPn / Nigg).